Here is a 542-residue protein sequence, read N- to C-terminus: Amino-acid acetyltransferase, mitochondrial (542 aa).

Residues 1 to 14 (MLFRRLLTTKVGYH) constitute a mitochondrion transit peptide. In terms of domain architecture, N-acetyltransferase spans 368 to 534 (AGSAQLPAHK…LREYITYVRD (167 aa)).

The protein belongs to the acetyltransferase family.

The protein localises to the mitochondrion. The enzyme catalyses L-glutamate + acetyl-CoA = N-acetyl-L-glutamate + CoA + H(+). It participates in amino-acid biosynthesis; L-arginine biosynthesis; N(2)-acetyl-L-ornithine from L-glutamate: step 1/4. Its function is as follows. N-acetylglutamate synthase involved in arginine biosynthesis. The chain is Amino-acid acetyltransferase, mitochondrial (ARG2) from Eremothecium gossypii (strain ATCC 10895 / CBS 109.51 / FGSC 9923 / NRRL Y-1056) (Yeast).